A 107-amino-acid polypeptide reads, in one-letter code: EPIDERMAL PATTERNING FACTOR-like protein 5 (107 aa).

An N-terminal signal peptide occupies residues 1–22 (MGVVLPTLIVYAFLLFFSSSSA). 3 disulfide bridges follow: cysteine 64–cysteine 98, cysteine 68–cysteine 74, and cysteine 71–cysteine 100.

It belongs to the plant cysteine rich small secretory peptide family. Epidermal patterning factor subfamily. In terms of assembly, interacts with ERECTA. In terms of tissue distribution, expressed asymetically in the hypocotyl, on the side proximal to the folded cotyledons at germination. Detected in developing flowers, the chalazal region of ovules and near the root apex, but not in inflorescence stems. Expressed in cotyledons, flowers, adult leaves and fruits.

Its subcellular location is the secreted. Its function is as follows. Controls stomatal patterning. Mediates differentiation of stomatal lineage cells to pavement cells and stomatal development inhibition. TMM (AC Q9SSD1) functions to dampen or block CLL1 signaling. Acts as a growth-regulatory ligand for ERECTA family receptors. Promotes fruit growth and fertility. The chain is EPIDERMAL PATTERNING FACTOR-like protein 5 from Arabidopsis thaliana (Mouse-ear cress).